The sequence spans 198 residues: Probable opine utilization operon repressor (198 aa).

Its pathway is opine metabolism; mannopine biosynthesis [regulation]. Functionally, possible repressor for genes for mannityl-opine utilization and / or plasmid conjugative transfer. This chain is Probable opine utilization operon repressor (opnR), found in Rhizobium rhizogenes (Agrobacterium rhizogenes).